The following is a 275-amino-acid chain: DNA-directed RNA polymerase subunit Rpo3 (275 aa).

Belongs to the archaeal Rpo3/eukaryotic RPB3 RNA polymerase subunit family. In terms of assembly, part of the RNA polymerase complex.

It localises to the cytoplasm. The enzyme catalyses RNA(n) + a ribonucleoside 5'-triphosphate = RNA(n+1) + diphosphate. Its function is as follows. DNA-dependent RNA polymerase (RNAP) catalyzes the transcription of DNA into RNA using the four ribonucleoside triphosphates as substrates. The chain is DNA-directed RNA polymerase subunit Rpo3 from Methanopyrus kandleri (strain AV19 / DSM 6324 / JCM 9639 / NBRC 100938).